Consider the following 75-residue polypeptide: Protein Tlp homolog (75 aa).

The segment at 48–75 (KNQRRREALDGMREEIKDEARDKKNGYM) is disordered.

Belongs to the Tlp family.

This Clostridium botulinum (strain 657 / Type Ba4) protein is Protein Tlp homolog.